The following is a 479-amino-acid chain: Galactosylgalactosylxylosylprotein 3-beta-glucuronosyltransferase P (479 aa).

The Cytoplasmic segment spans residues 1 to 34 (MKGGNYTSLGTCSGINVSGNVAGTRKMSLGKSIK). Residues 35–50 (MYLTIFILTTCIYMAL) traverse the membrane as a helical; Signal-anchor for type II membrane protein segment. Over 51-479 (YQYHISREPF…EHIDRLLVRP (429 aa)) the chain is Lumenal. N-linked (GlcNAc...) asparagine glycans are attached at residues asparagine 90, asparagine 97, asparagine 98, and asparagine 271. Over residues 94 to 120 (NTNNNSTTTSTTTTTAPTTPTTTTTTT) the composition is skewed to low complexity. Residues 94–122 (NTNNNSTTTSTTTTTAPTTPTTTTTTTVG) form a disordered region. Aspartate 335 lines the Mn(2+) pocket. The active-site Proton acceptor is the glutamate 418. N-linked (GlcNAc...) asparagine glycosylation is present at asparagine 460.

It belongs to the glycosyltransferase 43 family. Mn(2+) is required as a cofactor.

The protein resides in the golgi apparatus membrane. It catalyses the reaction 3-O-(beta-D-galactosyl-(1-&gt;3)-beta-D-galactosyl-(1-&gt;4)-beta-D-xylosyl)-L-seryl-[protein] + UDP-alpha-D-glucuronate = 3-O-(beta-D-GlcA-(1-&gt;3)-beta-D-Gal-(1-&gt;3)-beta-D-Gal-(1-&gt;4)-beta-D-Xyl)-L-seryl-[protein] + UDP + H(+). Its pathway is protein modification; protein glycosylation. Functionally, involved in the biosynthesis of L2/HNK-1 carbohydrate epitope on both glycolipids and glycoproteins. Enzyme has a broad specificity. This Drosophila melanogaster (Fruit fly) protein is Galactosylgalactosylxylosylprotein 3-beta-glucuronosyltransferase P (GlcAT-P).